The primary structure comprises 114 residues: UPF0342 protein SH1117 (114 aa).

The protein belongs to the UPF0342 family.

This is UPF0342 protein SH1117 from Staphylococcus haemolyticus (strain JCSC1435).